Here is a 36-residue protein sequence, read N- to C-terminus: Delta-amaurobitoxin-Pl1c (36 aa).

Intrachain disulfides connect Cys-3-Cys-19, Cys-10-Cys-24, Cys-18-Cys-34, and Cys-26-Cys-32.

In terms of tissue distribution, expressed by the venom gland.

Its subcellular location is the secreted. Its function is as follows. Binds at site 4 of sodium channels (Nav) and inhibits the fast inactivation of cockroach channels. This toxin is active only on insects. Has a potent activity against S.litura larvae. In Pireneitega luctuosa (Tangled nest spider), this protein is Delta-amaurobitoxin-Pl1c.